Here is a 382-residue protein sequence, read N- to C-terminus: MKAVHFGAGNIGRGFIGKVLSDSNVAVTFADVDAPLVDQLCHDQSYKVKVVGSKCQIDTVTHVTAVNSTSDDVIERIVHTDLVTTAVGPNVLNIIAKTIAKGLTKRFEANNESPLNIIACENMVRGTTHLKNEVYSHLDDSFHARCDELVGFVDSAVDRIVPPSEAANDDLLEVTVESFSEWIVDEKQFKGGVPNIAGMEKTDNLMAFVERKLFTLNTGHCITAYLGALKGHETVRDAIQDPEIRTEVKAAMEESGEVLIRRYGFDKELHAAYIEKILGRFANPYLRDEIDRVARQPIRKLGENDRLIKPLLGTIEYGIENKTLLKGIAAAFKYVNDTDPQAVELQTHLQESGLKATLAHYTGLNENSSEAKKIEAIFTTLN.

3-14 (AVHFGAGNIGRG) lines the NAD(+) pocket.

This sequence belongs to the mannitol dehydrogenase family.

The catalysed reaction is D-mannitol 1-phosphate + NAD(+) = beta-D-fructose 6-phosphate + NADH + H(+). This Aliivibrio salmonicida (strain LFI1238) (Vibrio salmonicida (strain LFI1238)) protein is Mannitol-1-phosphate 5-dehydrogenase.